The sequence spans 439 residues: MEKTDLHVNLNEKVMVGPSLPLPKTTLQLSSIDNLPGVRGSIFNALLIYNASPSPTMVSADPAKLIREALAKILVYYPPFAGRLRETENGDLEVECTGEGAMFLEAMADNELSVLGDFDDSNPSFQQLLFSLPLDTNFKDLPLLVVQVTRFTCGGFVVGVSFHHGVCDGRGAAQFLKGLAEMARGEVKLSLEPIWNRELVKLDDPKYLQFFHFEFLRAPSIVEKIVQTYFIIDFETINYIKQSVMEECKEFCSSFEVASAMTWIARTRAFQIPESEYVKILFGMDMRNSFNPPLPSGYYGNSIGTACAVDNVQDLLSGSLLRAIMIIKKSKVSLNDNFKSRAVVKPSELDVNMNHENVVAFADWSRLGFDEVDFGWGNAVSVSPVQQQCELAMQNYFLFLKPSKNKPDGIKILMFLPLSKMKSFKIEMEAMMKKYVAKV.

Catalysis depends on proton acceptor residues His-164 and Asp-373.

Belongs to the plant acyltransferase family.

It catalyses the reaction taxa-4(20),11-dien-5alpha-ol + acetyl-CoA = taxa-4(20),11-dien-5alpha-yl acetate + CoA. Its pathway is alkaloid biosynthesis; taxol biosynthesis; 10-deacetyl-2-debenzoylbaccatin III from taxa-4(20),11-dien-5alpha-ol: step 1/3. The protein is Taxadien-5-alpha-ol O-acetyltransferase of Taxus chinensis (Chinese yew).